A 457-amino-acid chain; its full sequence is Serine--tRNA ligase (457 aa).

Position 252–254 (threonine 252–glutamate 254) interacts with L-serine. Residues arginine 283 to glutamate 285 and valine 299 contribute to the ATP site. Glutamate 306 contacts L-serine. Glutamate 370–serine 373 contacts ATP. Threonine 406 is a binding site for L-serine.

This sequence belongs to the class-II aminoacyl-tRNA synthetase family. Type-1 seryl-tRNA synthetase subfamily. In terms of assembly, homodimer. The tRNA molecule binds across the dimer.

The protein resides in the cytoplasm. It carries out the reaction tRNA(Ser) + L-serine + ATP = L-seryl-tRNA(Ser) + AMP + diphosphate + H(+). It catalyses the reaction tRNA(Sec) + L-serine + ATP = L-seryl-tRNA(Sec) + AMP + diphosphate + H(+). It functions in the pathway aminoacyl-tRNA biosynthesis; selenocysteinyl-tRNA(Sec) biosynthesis; L-seryl-tRNA(Sec) from L-serine and tRNA(Sec): step 1/1. Catalyzes the attachment of serine to tRNA(Ser). Is also able to aminoacylate tRNA(Sec) with serine, to form the misacylated tRNA L-seryl-tRNA(Sec), which will be further converted into selenocysteinyl-tRNA(Sec). This is Serine--tRNA ligase from Thermococcus onnurineus (strain NA1).